We begin with the raw amino-acid sequence, 289 residues long: BTB/POZ domain-containing protein KCTD7 (289 aa).

A disordered region spans residues 1 to 42; the sequence is MVVVNGREPDSRHSDGAMSSSEAEDDFLEPATPTATQAGHGL. Positions 53-141 constitute a BTB domain; that stretch reads VPLNIGGAHF…YAIGPLLEQL (89 aa).

In terms of assembly, interacts with CUL3.

The protein localises to the cell membrane. It is found in the cytoplasm. The protein resides in the cytosol. May be involved in the control of excitability of cortical neurons. The sequence is that of BTB/POZ domain-containing protein KCTD7 (Kctd7) from Rattus norvegicus (Rat).